A 196-amino-acid polypeptide reads, in one-letter code: Guanylate kinase (196 aa).

Residues 1 to 24 (MPVESGAGNDQPKRLTVLSGPSGV) form a disordered region. One can recognise a Guanylate kinase-like domain in the interval 13–191 (KRLTVLSGPS…VCDELLALIA (179 aa)). Residue 20–27 (GPSGVGKS) coordinates ATP.

This sequence belongs to the guanylate kinase family.

Its subcellular location is the cytoplasm. It carries out the reaction GMP + ATP = GDP + ADP. In terms of biological role, essential for recycling GMP and indirectly, cGMP. This is Guanylate kinase from Thermobifida fusca (strain YX).